The chain runs to 490 residues: Transmembrane protein 185-like (490 aa).

The span at 1–31 shows a compositional bias: low complexity; the sequence is MIENENTSLLSTSSSSTSSSPNNANSPSSLN. Disordered stretches follow at residues 1 to 151 and 455 to 490; these read MIEN…SKYK and NMIN…ISNL. The segment covering 47 to 59 has biased composition (polar residues); sequence TSGNNSPSAQITK. Low complexity-rich tracts occupy residues 66-80 and 89-108; these read SNNS…NSRS and NNNN…NNIN. Over residues 109–125 the composition is skewed to polar residues; it reads KHNSIVYNKSNNKLNSI. Gly residues predominate over residues 133–145; sequence QGGGGGNGNGNGN. The span at 463 to 472 shows a compositional bias: acidic residues; that stretch reads SESESDDETE.

This sequence belongs to the TMEM185 family.

The sequence is that of Transmembrane protein 185-like from Dictyostelium discoideum (Social amoeba).